Consider the following 1226-residue polypeptide: uncharacterized protein (1226 aa).

This sequence belongs to the Mg-chelatase subunit H family.

This is an uncharacterized protein from Methanocaldococcus jannaschii (strain ATCC 43067 / DSM 2661 / JAL-1 / JCM 10045 / NBRC 100440) (Methanococcus jannaschii).